A 276-amino-acid polypeptide reads, in one-letter code: Large ribosomal subunit protein uL2 (276 aa).

Residues 211-276 are disordered; the sequence is RNRHRGIRPQ…KLIISRRKGK (66 aa). Basic and acidic residues predominate over residues 230 to 240; the sequence is DHPHGGGEGKK.

Belongs to the universal ribosomal protein uL2 family. In terms of assembly, part of the 50S ribosomal subunit. Forms a bridge to the 30S subunit in the 70S ribosome.

Its function is as follows. One of the primary rRNA binding proteins. Required for association of the 30S and 50S subunits to form the 70S ribosome, for tRNA binding and peptide bond formation. It has been suggested to have peptidyltransferase activity; this is somewhat controversial. Makes several contacts with the 16S rRNA in the 70S ribosome. This is Large ribosomal subunit protein uL2 from Campylobacter jejuni subsp. doylei (strain ATCC BAA-1458 / RM4099 / 269.97).